We begin with the raw amino-acid sequence, 381 residues long: MTKKILFCATVDYHFKAFHLPYFKWFKQMGWEVHVAANGQTKLPYVDEKFSIPIRRSPFDPQNLAVYRQLKKVIDTYEYDIVHCHTPVGGVLARLAARQARRHGTKVLYTAHGFHFCKGAPMKNWLLYYPVEKWLSAYTDCLITINEEDYIRAKGLQRPGGRTQKIHGIGVNTERFRPVSPIEQQRLREKHGFREDDFILVYPAELNLNKNQKQLIEAAALLKEKIPSLRLVFAGEGAMEHTYQTLAEKLGASAHVCFYGFCSDIHELIQLADVSVASSIREGLGMNVLEGMAAEQPAIATDNRGHREIIRDGENGFLIKIGDSAAFARRIEQLYHKPELCRKLGQEGRKTALRFSEARTVEEMADIYSAYMDMDTKEKSV.

The protein belongs to the glycosyltransferase group 1 family. Glycosyltransferase 4 subfamily.

Its function is as follows. May be involved in the production of the exopolysaccharide (EPS) component of the extracellular matrix during biofilm formation. EPS is responsible for the adhesion of chains of cells into bundles. Required for biofilm maintenance. This Bacillus subtilis (strain 168) protein is Putative glycosyltransferase EpsD (epsD).